The primary structure comprises 297 residues: 4-hydroxy-tetrahydrodipicolinate synthase (297 aa).

Residue T49 participates in pyruvate binding. The active-site Proton donor/acceptor is Y137. K166 functions as the Schiff-base intermediate with substrate in the catalytic mechanism. I208 contributes to the pyruvate binding site.

It belongs to the DapA family. As to quaternary structure, homotetramer; dimer of dimers.

It localises to the cytoplasm. The catalysed reaction is L-aspartate 4-semialdehyde + pyruvate = (2S,4S)-4-hydroxy-2,3,4,5-tetrahydrodipicolinate + H2O + H(+). Its pathway is amino-acid biosynthesis; L-lysine biosynthesis via DAP pathway; (S)-tetrahydrodipicolinate from L-aspartate: step 3/4. In terms of biological role, catalyzes the condensation of (S)-aspartate-beta-semialdehyde [(S)-ASA] and pyruvate to 4-hydroxy-tetrahydrodipicolinate (HTPA). In Chlorobium phaeobacteroides (strain BS1), this protein is 4-hydroxy-tetrahydrodipicolinate synthase.